Reading from the N-terminus, the 516-residue chain is Probable inorganic phosphate transporter 1-6 (516 aa).

Ala2 bears the N-acetylalanine mark. Over 2–25 (ANEEQGSILKALDVAKTQWYHVTA) the chain is Cytoplasmic. Residues 26–46 (VVVSGMGFFTDSYDLFVISLI) form a helical membrane-spanning segment. The Extracellular segment spans residues 47-71 (TKLLGRIYYQVPGSSSPGSLPDGIS). A helical transmembrane segment spans residues 72 to 92 (AAVSGVAFAGTFIGQIFFGCL). Residues 93-100 (GDKLGRKR) lie on the Cytoplasmic side of the membrane. The chain crosses the membrane as a helical span at residues 101–121 (VYGLTLLIMTICSICSGLSLG). The Extracellular segment spans residues 122–132 (RDPKTVMVTLC). Residues 133–153 (FFRFWLGFGIGGDYPLSATIM) traverse the membrane as a helical segment. Residues 154–162 (SEYSNKRTR) lie on the Cytoplasmic side of the membrane. A helical membrane pass occupies residues 163–183 (GAFIAAVFGMQGIGILAAGAV). The Extracellular segment spans residues 184-212 (SLLVSAVFESKFPSRAYILDGAASTVPQA). Residues 213 to 233 (DYVWRIILMVGALPALLTYYW) form a helical membrane-spanning segment. Topologically, residues 234–293 (RMKMPETARYTALVSKNAEQAALDMTKVLNVDIEASAAKNDQARVSSDEFGLFSMKFLRR) are cytoplasmic. A helical membrane pass occupies residues 294–314 (HGLHLLGTASTWFLLDIAFYS). Residues 315–349 (QNLFQKDIFTTIGWLPSAKTMNAIQELYMIAKAQT) are Extracellular-facing. A helical transmembrane segment spans residues 350 to 370 (IIACCSTVPGYFFTVGFIDYM). The Cytoplasmic portion of the chain corresponds to 371–374 (GRKK). A helical transmembrane segment spans residues 375–395 (IQIMGFAMMTIFMLSLAIPYH). Topologically, residues 396-403 (HWTLPANR) are extracellular. Residues 404-424 (IGFVVLYSFTFFFSNFGPNAT) traverse the membrane as a helical segment. Residues 425 to 442 (TFIVPAEIFPARIRSTCH) lie on the Cytoplasmic side of the membrane. The helical transmembrane segment at 443–463 (GISAASGKAGAMVGSFGFSAL) threads the bilayer. The Extracellular segment spans residues 464–471 (VKALGMSN). The chain crosses the membrane as a helical span at residues 472 to 492 (TLYIMAGINLLGLLLTFTIPE). Topologically, residues 493–516 (TNGKSLEELSGETEPEKIKEKIVV) are cytoplasmic.

It belongs to the major facilitator superfamily. Phosphate:H(+) symporter (TC 2.A.1.9) family. Expressed in anthers, tapetumand mature pollen and, to a lower extent, in hydathodes and vascular tissues of cotyledons of flowering plants.

The protein resides in the membrane. In terms of biological role, high-affinity transporter for external inorganic phosphate. This chain is Probable inorganic phosphate transporter 1-6 (PHT1-6), found in Arabidopsis thaliana (Mouse-ear cress).